The following is a 114-amino-acid chain: YETEKNNGAGYFLEHLAFKGTKNRPGNALEKHLSSVSRVYEEDAVPGLTPCRNALVSHLDGTTPVCEDIGRRIPLAEWESRYFYDQCPAVAGYGPIEQLPDYNRIRSGMFWLRF.

N6-acetyllysine is present on lysine 31.

It belongs to the peptidase M16 family. UQCRC1/QCR1 subfamily. Component of the ubiquinol-cytochrome c oxidoreductase (cytochrome b-c1 complex, complex III, CIII), a multisubunit enzyme composed of 11 subunits. The complex is composed of 3 respiratory subunits cytochrome b, cytochrome c1 and Rieske protein UQCRFS1, 2 core protein subunits UQCRC1/QCR1 and UQCRC2/QCR2, and 6 low-molecular weight protein subunits UQCRH/QCR6, UQCRB/QCR7, UQCRQ/QCR8, UQCR10/QCR9, UQCR11/QCR10 and subunit 9, the cleavage product of Rieske protein UQCRFS1. The complex exists as an obligatory dimer and forms supercomplexes (SCs) in the inner mitochondrial membrane with NADH-ubiquinone oxidoreductase (complex I, CI) and cytochrome c oxidase (complex IV, CIV), resulting in different assemblies (supercomplex SCI(1)III(2)IV(1) and megacomplex MCI(2)III(2)IV(2)). Interacts with UQCC6. Interacts with STMP1.

The protein resides in the mitochondrion inner membrane. Functionally, component of the ubiquinol-cytochrome c oxidoreductase, a multisubunit transmembrane complex that is part of the mitochondrial electron transport chain which drives oxidative phosphorylation. The respiratory chain contains 3 multisubunit complexes succinate dehydrogenase (complex II, CII), ubiquinol-cytochrome c oxidoreductase (cytochrome b-c1 complex, complex III, CIII) and cytochrome c oxidase (complex IV, CIV), that cooperate to transfer electrons derived from NADH and succinate to molecular oxygen, creating an electrochemical gradient over the inner membrane that drives transmembrane transport and the ATP synthase. The cytochrome b-c1 complex catalyzes electron transfer from ubiquinol to cytochrome c, linking this redox reaction to translocation of protons across the mitochondrial inner membrane, with protons being carried across the membrane as hydrogens on the quinol. In the process called Q cycle, 2 protons are consumed from the matrix, 4 protons are released into the intermembrane space and 2 electrons are passed to cytochrome c. The 2 core subunits UQCRC1/QCR1 and UQCRC2/QCR2 are homologous to the 2 mitochondrial-processing peptidase (MPP) subunits beta-MPP and alpha-MPP respectively, and they seem to have preserved their MPP processing properties. May be involved in the in situ processing of UQCRFS1 into the mature Rieske protein and its mitochondrial targeting sequence (MTS)/subunit 9 when incorporated into complex III. Seems to play an important role in the maintenance of proper mitochondrial function in nigral dopaminergic neurons. The sequence is that of Cytochrome b-c1 complex subunit 1, mitochondrial from Mesocricetus auratus (Golden hamster).